The following is a 207-amino-acid chain: Superoxide dismutase [Mn] (207 aa).

Mn(2+)-binding residues include H28, H76, D160, and H164.

This sequence belongs to the iron/manganese superoxide dismutase family. In terms of assembly, homotetramer. Requires Mn(2+) as cofactor.

The protein resides in the secreted. It carries out the reaction 2 superoxide + 2 H(+) = H2O2 + O2. Destroys superoxide anion radicals which are normally produced within the cells and which are toxic to biological systems. The polypeptide is Superoxide dismutase [Mn] (sodA) (Mycolicibacterium smegmatis (Mycobacterium smegmatis)).